We begin with the raw amino-acid sequence, 151 residues long: Aspartate carbamoyltransferase regulatory chain (151 aa).

Positions 107, 112, 135, and 138 each coordinate Zn(2+).

Belongs to the PyrI family. As to quaternary structure, contains catalytic and regulatory chains. Zn(2+) serves as cofactor.

In terms of biological role, involved in allosteric regulation of aspartate carbamoyltransferase. The polypeptide is Aspartate carbamoyltransferase regulatory chain (Thermococcus gammatolerans (strain DSM 15229 / JCM 11827 / EJ3)).